Here is a 182-residue protein sequence, read N- to C-terminus: GTP cyclohydrolase 1 (182 aa).

Residues Cys-73, His-76, and Cys-144 each coordinate Zn(2+).

The protein belongs to the GTP cyclohydrolase I family. Homomer.

It catalyses the reaction GTP + H2O = 7,8-dihydroneopterin 3'-triphosphate + formate + H(+). It functions in the pathway cofactor biosynthesis; 7,8-dihydroneopterin triphosphate biosynthesis; 7,8-dihydroneopterin triphosphate from GTP: step 1/1. This chain is GTP cyclohydrolase 1, found in Hydrogenobaculum sp. (strain Y04AAS1).